The primary structure comprises 162 residues: 2-C-methyl-D-erythritol 2,4-cyclodiphosphate synthase (162 aa).

A divalent metal cation is bound by residues Asp9 and His11. Residues 9 to 11 and 35 to 36 each bind 4-CDP-2-C-methyl-D-erythritol 2-phosphate; these read DVH and HS. His43 contributes to the a divalent metal cation binding site. Residues 57-59, 62-66, 133-136, Phe140, and Arg143 contribute to the 4-CDP-2-C-methyl-D-erythritol 2-phosphate site; these read DIG, FPDTD, and TTTE.

Belongs to the IspF family. Homotrimer. A divalent metal cation serves as cofactor.

The catalysed reaction is 4-CDP-2-C-methyl-D-erythritol 2-phosphate = 2-C-methyl-D-erythritol 2,4-cyclic diphosphate + CMP. It functions in the pathway isoprenoid biosynthesis; isopentenyl diphosphate biosynthesis via DXP pathway; isopentenyl diphosphate from 1-deoxy-D-xylulose 5-phosphate: step 4/6. Involved in the biosynthesis of isopentenyl diphosphate (IPP) and dimethylallyl diphosphate (DMAPP), two major building blocks of isoprenoid compounds. Catalyzes the conversion of 4-diphosphocytidyl-2-C-methyl-D-erythritol 2-phosphate (CDP-ME2P) to 2-C-methyl-D-erythritol 2,4-cyclodiphosphate (ME-CPP) with a corresponding release of cytidine 5-monophosphate (CMP). The sequence is that of 2-C-methyl-D-erythritol 2,4-cyclodiphosphate synthase from Histophilus somni (strain 2336) (Haemophilus somnus).